The primary structure comprises 77 residues: Subtilisin-chymotrypsin inhibitor CI-1C (77 aa).

Belongs to the protease inhibitor I13 (potato type I serine protease inhibitor) family.

Inhibits both subtilisin and chymotrypsin. This chain is Subtilisin-chymotrypsin inhibitor CI-1C, found in Hordeum vulgare (Barley).